The following is a 526-amino-acid chain: Probable feruloyl esterase B-2 (526 aa).

Positions 1 to 18 (MTKLSLLPLLTLASAVLA) are cleaved as a signal peptide. Intrachain disulfides connect Cys27-Cys74 and Cys62-Cys113. N-linked (GlcNAc...) asparagine glycosylation is present at Asn52. Asn137 carries an N-linked (GlcNAc...) asparagine glycan. Disulfide bonds link Cys186-Cys441, Cys255-Cys272, Cys281-Cys291, and Cys503-Cys525. The active-site Acyl-ester intermediate is Ser187. Asn233 is a glycosylation site (N-linked (GlcNAc...) asparagine). Residues Asp256, Asp259, Ala261, Asp263, and Ile265 each contribute to the Ca(2+) site. An N-linked (GlcNAc...) asparagine glycan is attached at Asn311. Catalysis depends on charge relay system residues Asp400 and His440. The N-linked (GlcNAc...) asparagine glycan is linked to Asn516.

Belongs to the tannase family.

The protein resides in the secreted. It carries out the reaction feruloyl-polysaccharide + H2O = ferulate + polysaccharide.. Its function is as follows. Involved in degradation of plant cell walls. Hydrolyzes the feruloyl-arabinose ester bond in arabinoxylans as well as the feruloyl-galactose and feruloyl-arabinose ester bonds in pectin. The sequence is that of Probable feruloyl esterase B-2 (faeB-2) from Aspergillus fumigatus (strain CBS 144.89 / FGSC A1163 / CEA10) (Neosartorya fumigata).